Consider the following 148-residue polypeptide: Lysozyme C (148 aa).

A signal peptide spans 1 to 18 (MKALIVLGLVLLSVTVQG). The 130-residue stretch at 19–148 (KVFERCELAR…VRQYVQGCGV (130 aa)) folds into the C-type lysozyme domain. Disulfide bonds link Cys24–Cys146, Cys48–Cys134, Cys83–Cys99, and Cys95–Cys113. Residues Glu53 and Asp71 contribute to the active site.

It belongs to the glycosyl hydrolase 22 family. In terms of assembly, monomer.

Its subcellular location is the secreted. It catalyses the reaction Hydrolysis of (1-&gt;4)-beta-linkages between N-acetylmuramic acid and N-acetyl-D-glucosamine residues in a peptidoglycan and between N-acetyl-D-glucosamine residues in chitodextrins.. Lysozymes have primarily a bacteriolytic function; those in tissues and body fluids are associated with the monocyte-macrophage system and enhance the activity of immunoagents. The sequence is that of Lysozyme C (LYZ) from Homo sapiens (Human).